Consider the following 556-residue polypeptide: CBS domain-containing protein CBSCBSPB3 (556 aa).

Composition is skewed to polar residues over residues 1-20 (MSTQ…NSTV) and 30-44 (PVQS…NTSK). Positions 1–63 (MSTQATGPSS…SQAPSNGERT (63 aa)) are disordered. Ser2 carries the post-translational modification N-acetylserine. CBS domains are found at residues 68-127 (RLSK…RPDQ), 134-189 (MTRN…RMEK), 235-294 (ITDN…LSPE), and 302-360 (MTPN…ENSS). The PB1 domain occupies 414–502 (GNSFSFKFED…KVLRLHLDFT (89 aa)). Residues 527 to 549 (WVSWRGGVVVTGAVVLTSIAIVV) traverse the membrane as a helical segment.

It localises to the membrane. This Arabidopsis thaliana (Mouse-ear cress) protein is CBS domain-containing protein CBSCBSPB3 (CBSCBSPB3).